We begin with the raw amino-acid sequence, 152 residues long: Transcriptional regulator MraZ (152 aa).

2 SpoVT-AbrB domains span residues 5–52 and 81–124; these read ATLV…PLPE and ASEC…DETT.

This sequence belongs to the MraZ family. Forms oligomers.

The protein resides in the cytoplasm. It localises to the nucleoid. Negatively regulates its own expression and that of the subsequent genes in the proximal part of the division and cell wall (dcw) gene cluster. Acts by binding directly to DNA. May also regulate the expression of genes outside the dcw cluster. The chain is Transcriptional regulator MraZ from Salmonella gallinarum (strain 287/91 / NCTC 13346).